The sequence spans 119 residues: NADH-quinone oxidoreductase subunit A (119 aa).

The next 3 helical transmembrane spans lie at 9 to 29 (VLLF…LGYV), 63 to 83 (LVAI…PWAV), and 88 to 108 (VGVT…VGFA).

This sequence belongs to the complex I subunit 3 family. NDH-1 is composed of 14 different subunits. Subunits NuoA, H, J, K, L, M, N constitute the membrane sector of the complex.

The protein localises to the cell inner membrane. The catalysed reaction is a quinone + NADH + 5 H(+)(in) = a quinol + NAD(+) + 4 H(+)(out). Functionally, NDH-1 shuttles electrons from NADH, via FMN and iron-sulfur (Fe-S) centers, to quinones in the respiratory chain. The immediate electron acceptor for the enzyme in this species is believed to be ubiquinone. Couples the redox reaction to proton translocation (for every two electrons transferred, four hydrogen ions are translocated across the cytoplasmic membrane), and thus conserves the redox energy in a proton gradient. The sequence is that of NADH-quinone oxidoreductase subunit A from Acidovorax sp. (strain JS42).